The chain runs to 294 residues: 4-hydroxy-tetrahydrodipicolinate synthase (294 aa).

Thr45 contributes to the pyruvate binding site. Catalysis depends on Tyr133, which acts as the Proton donor/acceptor. Lys162 functions as the Schiff-base intermediate with substrate in the catalytic mechanism. Ile204 lines the pyruvate pocket.

The protein belongs to the DapA family. Homotetramer; dimer of dimers.

The protein resides in the cytoplasm. It catalyses the reaction L-aspartate 4-semialdehyde + pyruvate = (2S,4S)-4-hydroxy-2,3,4,5-tetrahydrodipicolinate + H2O + H(+). It functions in the pathway amino-acid biosynthesis; L-lysine biosynthesis via DAP pathway; (S)-tetrahydrodipicolinate from L-aspartate: step 3/4. Functionally, catalyzes the condensation of (S)-aspartate-beta-semialdehyde [(S)-ASA] and pyruvate to 4-hydroxy-tetrahydrodipicolinate (HTPA). This is 4-hydroxy-tetrahydrodipicolinate synthase from Bartonella quintana (strain Toulouse) (Rochalimaea quintana).